Consider the following 416-residue polypeptide: Enterobactin exporter EntS (416 aa).

Residues 1 to 21 (MNKQSWLLNLSLLKTHPAFRA) are Cytoplasmic-facing. The helical transmembrane segment at 22–42 (VFLARFISIVSLGLLGVAVPV) threads the bilayer. At 43-55 (QIQMMTHSTWQVG) the chain is on the periplasmic side. Residues 56 to 76 (LSVTLTGGAMFVGLMVGGVLA) traverse the membrane as a helical segment. Over 77–83 (DRYERKK) the chain is Cytoplasmic. The chain crosses the membrane as a helical span at residues 84–104 (VILLARGTCGIGFIGLCLNAL). Topologically, residues 105–109 (LPEPS) are periplasmic. A helical transmembrane segment spans residues 110-130 (LLAIYLLGLWDGFFASLGVTA). Residues 131–156 (LLAATPALVGRENLMQAGAITMLTVR) lie on the Cytoplasmic side of the membrane. The helical transmembrane segment at 157 to 177 (LGSVNSPMIGGLLLAIGGVAW) threads the bilayer. N178 is a topological domain (periplasmic). Residues 179 to 199 (YGLAAAGTFITLLPLLSLPAL) traverse the membrane as a helical segment. Residues 200-218 (PPPPQPREHPLKSLLAGFR) are Cytoplasmic-facing. The helical transmembrane segment at 219–239 (FLLASPLVGGIALLGGLLTMA) threads the bilayer. The Periplasmic segment spans residues 240 to 256 (SAVRVLYPALADNWQMS). The chain crosses the membrane as a helical span at residues 257–277 (AAQIGFLYAAIPLGAAIGALT). Over 278–287 (SGKLAHSARP) the chain is Cytoplasmic. Residues 288-307 (GLLMLLSTLGSFLAIGLFGL) traverse the membrane as a helical segment. Residues 308-313 (MPMWIL) are Periplasmic-facing. Residues 314-336 (GVVCLALFGWLSAVSSLLQYTML) form a helical membrane-spanning segment. Residues 337 to 356 (QTQTPEVMLGRINGLWTAQN) lie on the Cytoplasmic side of the membrane. The helical transmembrane segment at 357 to 377 (VTGDAIGAALLGGLGAMMTPV) threads the bilayer. Position 378 (A378) is a topological domain, periplasmic. Residues 379–399 (SASASGFGLLIIGVLLLLVLV) traverse the membrane as a helical segment. Residues 400–416 (ELRHFRQTPPQVTASDS) lie on the Cytoplasmic side of the membrane.

It belongs to the major facilitator superfamily. EntS (TC 2.A.1.38) family.

Its subcellular location is the cell inner membrane. Functionally, component of an export pathway for enterobactin. The polypeptide is Enterobactin exporter EntS (Shigella dysenteriae serotype 1 (strain Sd197)).